Reading from the N-terminus, the 225-residue chain is NAD(P)H-quinone oxidoreductase subunit K, chloroplastic (225 aa).

Positions 43, 44, 108, and 139 each coordinate [4Fe-4S] cluster.

It belongs to the complex I 20 kDa subunit family. In terms of assembly, NDH is composed of at least 16 different subunits, 5 of which are encoded in the nucleus. Requires [4Fe-4S] cluster as cofactor.

It is found in the plastid. Its subcellular location is the chloroplast thylakoid membrane. It carries out the reaction a plastoquinone + NADH + (n+1) H(+)(in) = a plastoquinol + NAD(+) + n H(+)(out). The catalysed reaction is a plastoquinone + NADPH + (n+1) H(+)(in) = a plastoquinol + NADP(+) + n H(+)(out). In terms of biological role, NDH shuttles electrons from NAD(P)H:plastoquinone, via FMN and iron-sulfur (Fe-S) centers, to quinones in the photosynthetic chain and possibly in a chloroplast respiratory chain. The immediate electron acceptor for the enzyme in this species is believed to be plastoquinone. Couples the redox reaction to proton translocation, and thus conserves the redox energy in a proton gradient. The sequence is that of NAD(P)H-quinone oxidoreductase subunit K, chloroplastic from Triticum aestivum (Wheat).